We begin with the raw amino-acid sequence, 569 residues long: S-(+)-linalool synthase, chloroplastic (569 aa).

The N-terminal 39 residues, 1–39, are a transit peptide targeting the chloroplast; that stretch reads MALIATKISSRSCFVSAYPNNSPTFLISKFPNTVDSLSP. (2E)-geranyl diphosphate is bound by residues Arg-294, Asp-331, Asp-335, Arg-472, and Asp-475. Mg(2+)-binding residues include Asp-331 and Asp-335. Residues 331-335 carry the DDXXD motif motif; sequence DDIFD. The Mg(2+) site is built by Asp-475, Ser-479, and Glu-483.

This sequence belongs to the terpene synthase family. Tpsb subfamily. It depends on Mg(2+) as a cofactor. Mn(2+) is required as a cofactor. In terms of tissue distribution, predominantly expressed in flowers but also in stems and siliques.

Its subcellular location is the plastid. It localises to the chloroplast. The enzyme catalyses (2E)-geranyl diphosphate + H2O = (S)-linalool + diphosphate. It participates in secondary metabolite biosynthesis; terpenoid biosynthesis. In terms of biological role, involved in monoterpene (C10) biosynthesis. The major product is (S)-linalool. The protein is S-(+)-linalool synthase, chloroplastic of Arabidopsis thaliana (Mouse-ear cress).